We begin with the raw amino-acid sequence, 315 residues long: Olfactory receptor 10A4 (315 aa).

Over 1–26 (MMWENWTIVSEFVLVSFSALSTELQA) the chain is Extracellular. A glycan (N-linked (GlcNAc...) asparagine) is linked at Asn5. The chain crosses the membrane as a helical span at residues 27 to 47 (LLFLLFLTIYLVTLMGNVLII). Residues 48–55 (LVTIADSA) lie on the Cytoplasmic side of the membrane. Residues 56–76 (LQSPMYFFLRNLSFLEIGFNL) traverse the membrane as a helical segment. Over 77 to 100 (VIVPKMLGTLIIQDTTISFLGCAT) the chain is Extracellular. The cysteines at positions 98 and 190 are disulfide-linked. A helical membrane pass occupies residues 101-121 (QMYFFFFFGAAECCLLATMAY). At 122 to 140 (DRYVAICDPLHYPVIMGHI) the chain is on the cytoplasmic side. Residues 141–161 (SCAQLAAASWFSGFSVATVQT) form a helical membrane-spanning segment. Topologically, residues 162–198 (TWIFSFPFCGPNRVNHFFCDSPPVIALVCADTSVFEL) are extracellular. A helical membrane pass occupies residues 199-218 (EALTATVLFILFPFLLILGS). The Cytoplasmic portion of the chain corresponds to 219–238 (YVRILSTIFRMPSAEGKHQA). A helical transmembrane segment spans residues 239–259 (FSTCSAHLLVVSLFYSTAILT). The Extracellular portion of the chain corresponds to 260–272 (YFRPQSSASSESK). A helical transmembrane segment spans residues 273-293 (KLLSLSSTVVTPMLNPIIYSS). Topologically, residues 294–315 (RNKEVKAALKRLIHRTLGSQKL) are cytoplasmic.

It belongs to the G-protein coupled receptor 1 family. Expressed in the tongue.

It is found in the cell membrane. Functionally, odorant receptor (Potential). May be involved in taste perception. This Homo sapiens (Human) protein is Olfactory receptor 10A4 (OR10A4).